A 154-amino-acid chain; its full sequence is Superoxide dismutase [Cu-Zn] (154 aa).

3 residues coordinate Cu cation: H47, H49, and H64. Cysteines 58 and 147 form a disulfide. Zn(2+) contacts are provided by H64, H72, H81, and D84. H121 provides a ligand contact to Cu cation. R144 is a binding site for substrate.

Belongs to the Cu-Zn superoxide dismutase family. As to quaternary structure, homodimer. Requires Cu cation as cofactor. Zn(2+) serves as cofactor.

It is found in the cytoplasm. The catalysed reaction is 2 superoxide + 2 H(+) = H2O2 + O2. Its function is as follows. Destroys radicals which are normally produced within the cells and which are toxic to biological systems. This chain is Superoxide dismutase [Cu-Zn] (sod1), found in Schizosaccharomyces pombe (strain 972 / ATCC 24843) (Fission yeast).